The following is a 94-amino-acid chain: Pyrimidine/purine nucleoside phosphorylase (94 aa).

This sequence belongs to the nucleoside phosphorylase PpnP family.

It catalyses the reaction a purine D-ribonucleoside + phosphate = a purine nucleobase + alpha-D-ribose 1-phosphate. It carries out the reaction adenosine + phosphate = alpha-D-ribose 1-phosphate + adenine. The enzyme catalyses cytidine + phosphate = cytosine + alpha-D-ribose 1-phosphate. The catalysed reaction is guanosine + phosphate = alpha-D-ribose 1-phosphate + guanine. It catalyses the reaction inosine + phosphate = alpha-D-ribose 1-phosphate + hypoxanthine. It carries out the reaction thymidine + phosphate = 2-deoxy-alpha-D-ribose 1-phosphate + thymine. The enzyme catalyses uridine + phosphate = alpha-D-ribose 1-phosphate + uracil. The catalysed reaction is xanthosine + phosphate = alpha-D-ribose 1-phosphate + xanthine. Catalyzes the phosphorolysis of diverse nucleosides, yielding D-ribose 1-phosphate and the respective free bases. Can use uridine, adenosine, guanosine, cytidine, thymidine, inosine and xanthosine as substrates. Also catalyzes the reverse reactions. This chain is Pyrimidine/purine nucleoside phosphorylase, found in Escherichia fergusonii (strain ATCC 35469 / DSM 13698 / CCUG 18766 / IAM 14443 / JCM 21226 / LMG 7866 / NBRC 102419 / NCTC 12128 / CDC 0568-73).